The following is a 628-amino-acid chain: Protein ETHYLENE INSENSITIVE 3 (628 aa).

Residues 38–68 (EDDYTDDEIDVDELERRMWRDKMRLKRLKEQ) adopt a coiled-coil conformation. Positions 66–79 (KEQDKGKEGVDAAK) are enriched in basic and acidic residues. The tract at residues 66-92 (KEQDKGKEGVDAAKQRQSQEQARRKKM) is disordered. The segment at 174–306 (TPHTLQELQD…SLARELYPES (133 aa)) is DNA-binding domain.

This sequence belongs to the EIN3 family. As to quaternary structure, acts as a homodimer to bind the primary ethylene response element. Interacts with TAF12B. Interacts with KIN10. Binds to ENAP1 in the presence of ethylene; this reaction facilitates its association with histone. Phosphorylated by KIN10.

The protein resides in the nucleus. With respect to regulation, activated by phosphorylation by MPK3 and MPK6. Down-regulated by KIN10 that controls its protein stability under a phosphorylation-dependent manner. Satnilitzed during hypoxia (e.g. submergences) via a ceramides-triggered and CTR1-dependent manner. Functionally, transcription factor acting as a positive regulator in the ethylene response pathway, by promoting histone acetylation in an ENAP1-dependent manner, thus accelerating the expression of ethylene-responsive genes. Binds DNA. Is required for ethylene responsiveness in adult plant tissues. Binds a primary ethylene response element present in the ETHYLENE-RESPONSE-FACTOR1 promoter with consequence to activate the transcription of this gene. This is Protein ETHYLENE INSENSITIVE 3 from Arabidopsis thaliana (Mouse-ear cress).